An 818-amino-acid polypeptide reads, in one-letter code: Probable helicase MAGATAMA 3 (818 aa).

Positions 259 to 559 (NKSQKEAIDV…KMLKTQYRMH (301 aa)) constitute a UvrD-like helicase ATP-binding domain. Residue 280 to 287 (GPPGTGKT) coordinates ATP. Composition is skewed to acidic residues over residues 781 to 790 (PDAPLYEDES) and 798 to 818 (GDDD…AGED). The tract at residues 781–818 (PDAPLYEDESLPVAPYGGDDDFGDGDADQDDVAMAGED) is disordered.

This sequence belongs to the helicase family. Expressed in flowers, siliques, leaves, roots and shoot apex.

Its subcellular location is the nucleus. Probable helicase that may regulate RNA molecules involved in nucleolar organization and pollen tube guidance. This Arabidopsis thaliana (Mouse-ear cress) protein is Probable helicase MAGATAMA 3 (MAA3).